Consider the following 439-residue polypeptide: Rho GTPase-activating protein 1 (439 aa).

Methionine 1 is modified (N-acetylmethionine). A compositionally biased stretch (basic and acidic residues) spans 28–48 (IDEKNWPSDEMPDFPKSDDSK). The interval 28-52 (IDEKNWPSDEMPDFPKSDDSKSSSP) is disordered. Phosphoserine is present on residues serine 44, serine 47, serine 50, and serine 51. Positions 63–218 (PYYDIARHQI…QVLKYDDFLK (156 aa)) constitute a CRAL-TRIO domain. Phosphotyrosine is present on tyrosine 65. An N6-acetyllysine modification is found at lysine 80. An SH3-binding motif is present at residues 228 to 238 (PKPMPPRPPLP). Positions 244 to 431 (VSLQHLQEKN…FLLDHQGELF (188 aa)) constitute a Rho-GAP domain.

In terms of assembly, found in a complex with XPO7, EIF4A1, ARHGAP1, VPS26A, VPS29, VPS35 and SFN. Interacts with BNIPL. Ubiquitous.

It is found in the cytoplasm. In terms of biological role, GTPase activator for the Rho, Rac and Cdc42 proteins, converting them to the putatively inactive GDP-bound state. Cdc42 seems to be the preferred substrate. This is Rho GTPase-activating protein 1 (ARHGAP1) from Homo sapiens (Human).